Reading from the N-terminus, the 257-residue chain is Uroporphyrinogen-III C-methyltransferase (257 aa).

S-adenosyl-L-homocysteine contacts are provided by residues Pro11, 87 to 89, 117 to 118, and Met170; these read GGD and TS.

Belongs to the precorrin methyltransferase family.

The catalysed reaction is uroporphyrinogen III + 2 S-adenosyl-L-methionine = precorrin-2 + 2 S-adenosyl-L-homocysteine + H(+). It functions in the pathway cofactor biosynthesis; adenosylcobalamin biosynthesis; precorrin-2 from uroporphyrinogen III: step 1/1. Its pathway is porphyrin-containing compound metabolism; siroheme biosynthesis; precorrin-2 from uroporphyrinogen III: step 1/1. Catalyzes the two successive C-2 and C-7 methylation reactions involved in the conversion of uroporphyrinogen III to precorrin-2 via the intermediate formation of precorrin-1. It is a step in the biosynthesis of both cobalamin (vitamin B12) and siroheme. The sequence is that of Uroporphyrinogen-III C-methyltransferase (sumT) from Bacillus subtilis (strain 168).